A 197-amino-acid chain; its full sequence is Probable UbiX-like flavin prenyltransferase (197 aa).

Residues 9-11, S36, 87-90, and R122 contribute to the FMN site; these read GAT and SMKT.

It belongs to the UbiX/PAD1 family. YclB subfamily. As to quaternary structure, homododecamer.

It catalyses the reaction dimethylallyl phosphate + FMNH2 = prenylated FMNH2 + phosphate. In terms of biological role, flavin prenyltransferase that catalyzes the synthesis of the prenylated FMN cofactor (prenyl-FMN) for phenolic acid decarboxylase C. Involved in the decarboxylation and detoxification of phenolic derivatives under both aerobic and anaerobic conditions. The chain is Probable UbiX-like flavin prenyltransferase (ecdB) from Escherichia coli.